The following is a 595-amino-acid chain: NADH-quinone oxidoreductase subunit C/D (595 aa).

The NADH dehydrogenase I subunit C stretch occupies residues 1–186 (MAETDIAMPE…TPYMQNQAKQ (186 aa)). The segment at 210–595 (DFMFLNLGPN…IDVVMADVDR (386 aa)) is NADH dehydrogenase I subunit D.

In the N-terminal section; belongs to the complex I 30 kDa subunit family. The protein in the C-terminal section; belongs to the complex I 49 kDa subunit family. As to quaternary structure, NDH-1 is composed of 13 different subunits. Subunits NuoB, CD, E, F, and G constitute the peripheral sector of the complex.

The protein resides in the cell inner membrane. It catalyses the reaction a quinone + NADH + 5 H(+)(in) = a quinol + NAD(+) + 4 H(+)(out). Its function is as follows. NDH-1 shuttles electrons from NADH, via FMN and iron-sulfur (Fe-S) centers, to quinones in the respiratory chain. The immediate electron acceptor for the enzyme in this species is believed to be ubiquinone. Couples the redox reaction to proton translocation (for every two electrons transferred, four hydrogen ions are translocated across the cytoplasmic membrane), and thus conserves the redox energy in a proton gradient. In Acinetobacter baylyi (strain ATCC 33305 / BD413 / ADP1), this protein is NADH-quinone oxidoreductase subunit C/D.